Consider the following 429-residue polypeptide: Probable electron transfer flavoprotein-quinone oxidoreductase YdiS (429 aa).

Residue 8-22 (AIVVGAGVAGSVAAL) participates in FAD binding.

It belongs to the ETF-QO/FixC family. FAD is required as a cofactor.

Probably accepts electrons from YdiQ/YdiR and reduces a quinone. The protein is Probable electron transfer flavoprotein-quinone oxidoreductase YdiS (ydiS) of Escherichia coli (strain K12).